The following is a 74-amino-acid chain: UPF0435 protein ABC2298 (74 aa).

Belongs to the UPF0435 family.

This Shouchella clausii (strain KSM-K16) (Alkalihalobacillus clausii) protein is UPF0435 protein ABC2298.